We begin with the raw amino-acid sequence, 134 residues long: Beta-synuclein (134 aa).

2 tandem repeats follow at residues 20-30 (EKTKQGVTEAA) and 31-41 (EKTKEGVLYVG). A 4 X 11 AA tandem repeats of [EGS]-K-T-K-[EQ]-[GQ]-V-X(4) region spans residues 20–67 (EKTKQGVTEAAEKTKEGVLYVGSKTREGVVQGVASVAEKTKEQASHLG). One copy of the 3; approximate repeat lies at 42–56 (SKTREGVVQGVASVA). Copy 4 of the repeat occupies 57-67 (EKTKEQASHLG). The segment at 89-134 (FPTDLKPEEVAQEAAEEPLIEPLMEPEGESYEDPPQEEYQEYEPEA) is disordered. Positions 98–134 (VAQEAAEEPLIEPLMEPEGESYEDPPQEEYQEYEPEA) are enriched in acidic residues. S118 bears the Phosphoserine; by BARK1, CK2 and GRK5 mark.

This sequence belongs to the synuclein family. Phosphorylated. Phosphorylation by G-protein coupled receptor kinases (GRK) is more efficient than phosphorylation by CK1, CK2 and CaM-kinase II. In terms of tissue distribution, expressed predominantly in brain; concentrated in presynaptic nerve terminals.

It is found in the cytoplasm. Non-amyloid component of senile plaques found in Alzheimer disease. Could act as a regulator of SNCA aggregation process. Protects neurons from staurosporine and 6-hydroxy dopamine (6OHDA)-stimulated caspase activation in a p53/TP53-dependent manner. Contributes to restore the SNCA anti-apoptotic function abolished by 6OHDA. Not found in the Lewy bodies associated with Parkinson disease. This is Beta-synuclein (SNCB) from Homo sapiens (Human).